The sequence spans 920 residues: Isoleucine--tRNA ligase (920 aa).

The 'HIGH' region motif lies at 58–68 (PYANGHLHLGH). An L-isoleucyl-5'-AMP-binding site is contributed by Glu-569. The 'KMSKS' region signature appears at 610–614 (KMSKS). Lys-613 is a binding site for ATP. Zn(2+)-binding residues include Cys-895, Cys-898, Cys-910, and Cys-913.

Belongs to the class-I aminoacyl-tRNA synthetase family. IleS type 1 subfamily. In terms of assembly, monomer. Zn(2+) serves as cofactor.

It is found in the cytoplasm. It carries out the reaction tRNA(Ile) + L-isoleucine + ATP = L-isoleucyl-tRNA(Ile) + AMP + diphosphate. In terms of biological role, catalyzes the attachment of isoleucine to tRNA(Ile). As IleRS can inadvertently accommodate and process structurally similar amino acids such as valine, to avoid such errors it has two additional distinct tRNA(Ile)-dependent editing activities. One activity is designated as 'pretransfer' editing and involves the hydrolysis of activated Val-AMP. The other activity is designated 'posttransfer' editing and involves deacylation of mischarged Val-tRNA(Ile). The protein is Isoleucine--tRNA ligase of Helicobacter pylori (strain G27).